The sequence spans 257 residues: Hydroxyethylthiazole kinase 1 (257 aa).

Methionine 41 provides a ligand contact to substrate. 2 residues coordinate ATP: lysine 117 and threonine 162. Glycine 189 provides a ligand contact to substrate.

Belongs to the Thz kinase family. The cofactor is Mg(2+).

It catalyses the reaction 5-(2-hydroxyethyl)-4-methylthiazole + ATP = 4-methyl-5-(2-phosphooxyethyl)-thiazole + ADP + H(+). Its pathway is cofactor biosynthesis; thiamine diphosphate biosynthesis; 4-methyl-5-(2-phosphoethyl)-thiazole from 5-(2-hydroxyethyl)-4-methylthiazole: step 1/1. In terms of biological role, catalyzes the phosphorylation of the hydroxyl group of 4-methyl-5-beta-hydroxyethylthiazole (THZ). The sequence is that of Hydroxyethylthiazole kinase 1 from Oceanobacillus iheyensis (strain DSM 14371 / CIP 107618 / JCM 11309 / KCTC 3954 / HTE831).